Reading from the N-terminus, the 261-residue chain is uncharacterized protein (261 aa).

An HTH tetR-type domain is found at 15–75; it reads SINPEDIISG…AMTDRALSKY (61 aa). A DNA-binding region (H-T-H motif) is located at residues 38-57; it reads SMPLLGKHLGVGVTSIYWYF. A disordered region spans residues 234 to 261; it reads AAGEVAVRRPTATADAPTPGARAKAVAR. Positions 241-261 are enriched in low complexity; the sequence is RRPTATADAPTPGARAKAVAR.

This is an uncharacterized protein from Mycobacterium bovis (strain ATCC BAA-935 / AF2122/97).